Consider the following 961-residue polypeptide: Glycine dehydrogenase (decarboxylating) (961 aa).

Residue Lys-702 is modified to N6-(pyridoxal phosphate)lysine.

The protein belongs to the GcvP family. The glycine cleavage system is composed of four proteins: P, T, L and H. Requires pyridoxal 5'-phosphate as cofactor.

The enzyme catalyses N(6)-[(R)-lipoyl]-L-lysyl-[glycine-cleavage complex H protein] + glycine + H(+) = N(6)-[(R)-S(8)-aminomethyldihydrolipoyl]-L-lysyl-[glycine-cleavage complex H protein] + CO2. The glycine cleavage system catalyzes the degradation of glycine. The P protein binds the alpha-amino group of glycine through its pyridoxal phosphate cofactor; CO(2) is released and the remaining methylamine moiety is then transferred to the lipoamide cofactor of the H protein. In Rhodopseudomonas palustris (strain BisA53), this protein is Glycine dehydrogenase (decarboxylating).